The primary structure comprises 1430 residues: MGARASVLSGGKLDAWEKIRLRPGGKKKYRLKHLVWASRELERFALDPGLLETSEGCRKIIGQLQPSLQTGSEELKSLYNTIAVLYYVHQKVEVKDTKEALEKLEEEQNKGRQKTQQATAEKGVSQNYPIVQNLQGQMVHQSLSPRTLNAWVKVIEEKAFSPEVIPMFSALSEGATPQDLNTMLNTVGGHQAAMQMLKDTINEEAAEWDRLHPTQAGPIPPGQIREPRGSDIAGTTSTLQEQIQWMTGNPPVPVGEMYKRWIILGLNKIVRMYSPVGILDIRQGPKEPFRDYVDRFFKTLRAEQATQEVKGWMTDTLLVQNANPDCKTILKALGPGATLEEMMTACQGVGGPSHKARVLAEAMSQATNTAIMMQKSNFKGQRRIVKCFNCGKEGHIAKNCRAPRKKGCWKCGREGHQMKDCTERQAKFFRENLAFQQGEARKLHPEQARAVSPASRELQVRGGDNPISEAGAERRGTVPSLSFPQITLWQRPLVTIRVGGQLKEALLDTGADDTVLEDVNLPGKWKPKMIGGIGGFIKVKQYDSILIEICGHRAIGTVLVGPTPVNIIGRNMLTQIGCTLHFPISPIETVPVKLKPGMDGPKVKQWPLTEEKIKALTEICMEMEKEGKISKIGPENPYNTPVFAIKKKDSTKWRKLVDFRELNKRTQDFWEVQLGIPHPAGLKKKKSVTVLDVGDAYFSVPLDKDFRKYTASTIPSTNNETPGVRYQYNVLPQGWKGSPAIFQYSMTKILDPFRAKNPDIVIYQYMDDLYVGSDLEIGQHRTKIEELREHLLKWGLTTPDKKHQKEPPFLWMGYELHPDKWTVQPIQLPDKDSWTVNDIQKLVGKLNWASQIYPGIKVKQLCKLLRGAKALTDIVPLTTEAELELAENREILKEPVHGAYYDPSKDLIAEIQKQGQGQWTYQIYQEPFKNLKTGKYAKMRSAHTNDVKQLTEAVQKISLESIVIWGKTPKFRLPILKETWDTWWTEYWQATWIPEWEFVNTPPLVKLWYQLETEPIVGAETFYVDGASNRETKKGKAGYVTDRGRQKAVSLTETTNQKAELQAIQLALQDSGSEVNIVTDSQYALGIIQAQPDKSESELVNQIIEQLIKKEKVYLSWVPAHKGIGGNEQVDKLVSAGIRKVLFLDGIDKAQEEHEKYHNNWRAMASDFNIPAVVAKEIVASCDKCQLKGEAMHGQVDCSPGIWQLDCTHLEGKIILVAVHVASGYLEAEVIPAETGQETAYFLLKLAGRWPVKTIHTDNGTNFTSATVKAACWWAGIQQEFGIPYNPQSQGVVESMNKELKKIIGQIRDQAEHLKTAVQMAVFIHNFKRKGGIGGYSAGERTIDIIATDIQTRELQKQIIKIQNFRVYYRDSRDPVWKGPAKLLWKGEGAVVIQDNSEIKVVPRRKAKIIRDYGKQMAGDDCVAGRQDED.

Glycine 2 is lipidated: N-myristoyl glycine; by host. The interval 7–31 (VLSGGKLDAWEKIRLRPGGKKKYRL) is interaction with Gp41. The interval 8–43 (LSGGKLDAWEKIRLRPGGKKKYRLKHLVWASRELER) is interaction with host CALM1. Residues 12 to 19 (KLDAWEKI) form an interaction with host AP3D1 region. The segment at 14–33 (DAWEKIRLRPGGKKKYRLKH) is interaction with membrane phosphatidylinositol 4,5-bisphosphate and RNA. Positions 16 to 22 (WEKIRLR) match the Nuclear export signal motif. Residues 26 to 32 (KKKYRLK) carry the Nuclear localization signal motif. The interaction with membrane phosphatidylinositol 4,5-bisphosphate stretch occupies residues 73–77 (EELKS). A Phosphotyrosine; by host modification is found at tyrosine 128. An interaction with human PPIA/CYPA and NUP153 region spans residues 185–223 (NTVGGHQAAMQMLKDTINEEAAEWDRLHPTQAGPIPPGQ). Positions 273–359 (YSPVGILDIR…GGPSHKARVL (87 aa)) are dimerization/Multimerization of capsid protein p24. 2 CCHC-type zinc fingers span residues 385-402 (VKCFNCGKEGHIAKNCRA) and 406-423 (KGCWKCGREGHQMKDCTE). Positions 451–474 (VSPASRELQVRGGDNPISEAGAER) are disordered. The interval 484 to 488 (PQITL) is dimerization of protease. A Peptidase A2 domain is found at 503 to 572 (KEALLDTGAD…TPVNIIGRNM (70 aa)). The For protease activity; shared with dimeric partner role is filled by aspartate 508. Dimerization of protease stretches follow at residues 532–538 (GIGGFIK) and 571–583 (NMLTQIGCTLHFP). Residues 626 to 816 (EGKISKIGPE…PPFLWMGYEL (191 aa)) form the Reverse transcriptase domain. Residues aspartate 692, aspartate 767, and aspartate 768 each coordinate Mg(2+). Positions 809 to 817 (FLWMGYELH) are RT 'primer grip'. Positions 980 to 996 (WDTWWTEYWQATWIPEW) match the Tryptophan repeat motif motif. The 124-residue stretch at 1016-1139 (IVGAETFYVD…VDKLVSAGIR (124 aa)) folds into the RNase H type-1 domain. Mg(2+) is bound by residues aspartate 1025, glutamate 1060, aspartate 1080, and aspartate 1131. An Integrase-type zinc finger spans residues 1145-1186 (DGIDKAQEEHEKYHNNWRAMASDFNIPAVVAKEIVASCDKCQ). Positions 1154, 1158, 1182, and 1185 each coordinate Zn(2+). Residues 1196–1346 (VDCSPGIWQL…SAGERTIDII (151 aa)) form the Integrase catalytic domain. 3 residues coordinate Mg(2+): aspartate 1206, aspartate 1258, and glutamate 1294. The integrase-type DNA-binding region spans 1365–1412 (FRVYYRDSRDPVWKGPAKLLWKGEGAVVIQDNSEIKVVPRRKAKIIRD).

In terms of assembly, homotrimer; further assembles as hexamers of trimers. Interacts with gp41 (via C-terminus). Interacts with host CALM1; this interaction induces a conformational change in the Matrix protein, triggering exposure of the myristate group. Interacts with host AP3D1; this interaction allows the polyprotein trafficking to multivesicular bodies during virus assembly. Part of the pre-integration complex (PIC) which is composed of viral genome, matrix protein, Vpr and integrase. Homodimer; the homodimer further multimerizes as homohexamers or homopentamers. Interacts with human PPIA/CYPA; This interaction stabilizes the capsid. Interacts with human NUP153. Interacts with host PDZD8; this interaction stabilizes the capsid. Interacts with monkey TRIM5; this interaction destabilizes the capsid. As to quaternary structure, homodimer, whose active site consists of two apposed aspartic acid residues. In terms of assembly, heterodimer of p66 RT and p51 RT (RT p66/p51). Heterodimerization of RT is essential for DNA polymerase activity. The overall folding of the subdomains is similar in p66 RT and p51 RT but the spatial arrangements of the subdomains are dramatically different. Homotetramer; may further associate as a homohexadecamer. Part of the pre-integration complex (PIC) which is composed of viral genome, matrix protein, Vpr and integrase. Interacts with human SMARCB1/INI1 and human PSIP1/LEDGF isoform 1. Interacts with human KPNA3; this interaction might play a role in nuclear import of the pre-integration complex. Interacts with human NUP153; this interaction might play a role in nuclear import of the pre-integration complex. It depends on Mg(2+) as a cofactor. Post-translationally, specific enzymatic cleavages by the viral protease yield mature proteins. The protease is released by autocatalytic cleavage. The polyprotein is cleaved during and after budding, this process is termed maturation. Proteolytic cleavage of p66 RT removes the RNase H domain to yield the p51 RT subunit. Nucleocapsid protein p7 might be further cleaved after virus entry. In terms of processing, tyrosine phosphorylated presumably in the virion by a host kinase. Phosphorylation is apparently not a major regulator of membrane association. Phosphorylated possibly by host MAPK1; this phosphorylation is necessary for Pin1-mediated virion uncoating. Post-translationally, methylated by host PRMT6, impairing its function by reducing RNA annealing and the initiation of reverse transcription.

The protein resides in the host cell membrane. It localises to the host endosome. It is found in the host multivesicular body. Its subcellular location is the virion membrane. The protein localises to the host nucleus. The protein resides in the host cytoplasm. It localises to the virion. The enzyme catalyses Specific for a P1 residue that is hydrophobic, and P1' variable, but often Pro.. The catalysed reaction is Endohydrolysis of RNA in RNA/DNA hybrids. Three different cleavage modes: 1. sequence-specific internal cleavage of RNA. Human immunodeficiency virus type 1 and Moloney murine leukemia virus enzymes prefer to cleave the RNA strand one nucleotide away from the RNA-DNA junction. 2. RNA 5'-end directed cleavage 13-19 nucleotides from the RNA end. 3. DNA 3'-end directed cleavage 15-20 nucleotides away from the primer terminus.. It carries out the reaction 3'-end directed exonucleolytic cleavage of viral RNA-DNA hybrid.. It catalyses the reaction DNA(n) + a 2'-deoxyribonucleoside 5'-triphosphate = DNA(n+1) + diphosphate. With respect to regulation, protease: The viral protease is inhibited by many synthetic protease inhibitors (PIs), such as amprenavir, atazanavir, indinavir, loprinavir, nelfinavir, ritonavir and saquinavir. Use of protease inhibitors in tritherapy regimens permit more ambitious therapeutic strategies. Reverse transcriptase/ribonuclease H: RT can be inhibited either by nucleoside RT inhibitors (NRTIs) or by non nucleoside RT inhibitors (NNRTIs). NRTIs act as chain terminators, whereas NNRTIs inhibit DNA polymerization by binding a small hydrophobic pocket near the RT active site and inducing an allosteric change in this region. Classical NRTIs are abacavir, adefovir (PMEA), didanosine (ddI), lamivudine (3TC), stavudine (d4T), tenofovir (PMPA), zalcitabine (ddC), and zidovudine (AZT). Classical NNRTIs are atevirdine (BHAP U-87201E), delavirdine, efavirenz (DMP-266), emivirine (I-EBU), and nevirapine (BI-RG-587). The tritherapies used as a basic effective treatment of AIDS associate two NRTIs and one NNRTI. Mediates, with Gag polyprotein, the essential events in virion assembly, including binding the plasma membrane, making the protein-protein interactions necessary to create spherical particles, recruiting the viral Env proteins, and packaging the genomic RNA via direct interactions with the RNA packaging sequence (Psi). Gag-Pol polyprotein may regulate its own translation, by the binding genomic RNA in the 5'-UTR. At low concentration, the polyprotein would promote translation, whereas at high concentration, the polyprotein would encapsidate genomic RNA and then shut off translation. Functionally, targets the polyprotein to the plasma membrane via a multipartite membrane-binding signal, that includes its myristoylated N-terminus. Matrix protein is part of the pre-integration complex. Implicated in the release from host cell mediated by Vpu. Binds to RNA. In terms of biological role, forms the conical core that encapsulates the genomic RNA-nucleocapsid complex in the virion. Most core are conical, with only 7% tubular. The core is constituted by capsid protein hexamer subunits. The core is disassembled soon after virion entry. Host restriction factors such as TRIM5-alpha or TRIMCyp bind retroviral capsids and cause premature capsid disassembly, leading to blocks in reverse transcription. Capsid restriction by TRIM5 is one of the factors which restricts HIV-1 to the human species. Host PIN1 apparently facilitates the virion uncoating. On the other hand, interactions with PDZD8 or CYPA stabilize the capsid. Its function is as follows. Encapsulates and protects viral dimeric unspliced genomic RNA (gRNA). Binds these RNAs through its zinc fingers. Acts as a nucleic acid chaperone which is involved in rearangement of nucleic acid secondary structure during gRNA retrotranscription. Also facilitates template switch leading to recombination. As part of the polyprotein, participates in gRNA dimerization, packaging, tRNA incorporation and virion assembly. Aspartyl protease that mediates proteolytic cleavages of Gag and Gag-Pol polyproteins during or shortly after the release of the virion from the plasma membrane. Cleavages take place as an ordered, step-wise cascade to yield mature proteins. This process is called maturation. Displays maximal activity during the budding process just prior to particle release from the cell. Also cleaves Nef and Vif, probably concomitantly with viral structural proteins on maturation of virus particles. Hydrolyzes host EIF4GI and PABP1 in order to shut off the capped cellular mRNA translation. The resulting inhibition of cellular protein synthesis serves to ensure maximal viral gene expression and to evade host immune response. Also mediates cleavage of host YTHDF3. Mediates cleavage of host CARD8, thereby activating the CARD8 inflammasome, leading to the clearance of latent HIV-1 in patient CD4(+) T-cells after viral reactivation; in contrast, HIV-1 can evade CARD8-sensing when its protease remains inactive in infected cells prior to viral budding. Functionally, multifunctional enzyme that converts the viral RNA genome into dsDNA in the cytoplasm, shortly after virus entry into the cell. This enzyme displays a DNA polymerase activity that can copy either DNA or RNA templates, and a ribonuclease H (RNase H) activity that cleaves the RNA strand of RNA-DNA heteroduplexes in a partially processive 3' to 5' endonucleasic mode. Conversion of viral genomic RNA into dsDNA requires many steps. A tRNA(3)-Lys binds to the primer-binding site (PBS) situated at the 5'-end of the viral RNA. RT uses the 3' end of the tRNA primer to perform a short round of RNA-dependent minus-strand DNA synthesis. The reading proceeds through the U5 region and ends after the repeated (R) region which is present at both ends of viral RNA. The portion of the RNA-DNA heteroduplex is digested by the RNase H, resulting in a ssDNA product attached to the tRNA primer. This ssDNA/tRNA hybridizes with the identical R region situated at the 3' end of viral RNA. This template exchange, known as minus-strand DNA strong stop transfer, can be either intra- or intermolecular. RT uses the 3' end of this newly synthesized short ssDNA to perform the RNA-dependent minus-strand DNA synthesis of the whole template. RNase H digests the RNA template except for two polypurine tracts (PPTs) situated at the 5'-end and near the center of the genome. It is not clear if both polymerase and RNase H activities are simultaneous. RNase H probably can proceed both in a polymerase-dependent (RNA cut into small fragments by the same RT performing DNA synthesis) and a polymerase-independent mode (cleavage of remaining RNA fragments by free RTs). Secondly, RT performs DNA-directed plus-strand DNA synthesis using the PPTs that have not been removed by RNase H as primers. PPTs and tRNA primers are then removed by RNase H. The 3' and 5' ssDNA PBS regions hybridize to form a circular dsDNA intermediate. Strand displacement synthesis by RT to the PBS and PPT ends produces a blunt ended, linear dsDNA copy of the viral genome that includes long terminal repeats (LTRs) at both ends. In terms of biological role, integrase catalyzes viral DNA integration into the host chromosome, by performing a series of DNA cutting and joining reactions. This enzyme activity takes place after virion entry into a cell and reverse transcription of the RNA genome in dsDNA. The first step in the integration process is 3' processing. This step requires a complex comprising the viral genome, matrix protein, Vpr and integrase. This complex is called the pre-integration complex (PIC). The integrase protein removes 2 nucleotides from each 3' end of the viral DNA, leaving recessed CA OH's at the 3' ends. In the second step, the PIC enters cell nucleus. This process is mediated through integrase and Vpr proteins, and allows the virus to infect a non dividing cell. This ability to enter the nucleus is specific of lentiviruses, other retroviruses cannot and rely on cell division to access cell chromosomes. In the third step, termed strand transfer, the integrase protein joins the previously processed 3' ends to the 5' ends of strands of target cellular DNA at the site of integration. The 5'-ends are produced by integrase-catalyzed staggered cuts, 5 bp apart. A Y-shaped, gapped, recombination intermediate results, with the 5'-ends of the viral DNA strands and the 3' ends of target DNA strands remaining unjoined, flanking a gap of 5 bp. The last step is viral DNA integration into host chromosome. This involves host DNA repair synthesis in which the 5 bp gaps between the unjoined strands are filled in and then ligated. Since this process occurs at both cuts flanking the HIV genome, a 5 bp duplication of host DNA is produced at the ends of HIV-1 integration. Alternatively, Integrase may catalyze the excision of viral DNA just after strand transfer, this is termed disintegration. The chain is Gag-Pol polyprotein (gag-pol) from Homo sapiens (Human).